The sequence spans 275 residues: tRNA (guanine-N(1)-)-methyltransferase (275 aa).

Residues Gly-139 and 159 to 164 (IGDYIL) contribute to the S-adenosyl-L-methionine site.

The protein belongs to the RNA methyltransferase TrmD family. As to quaternary structure, homodimer.

Its subcellular location is the cytoplasm. The catalysed reaction is guanosine(37) in tRNA + S-adenosyl-L-methionine = N(1)-methylguanosine(37) in tRNA + S-adenosyl-L-homocysteine + H(+). Specifically methylates guanosine-37 in various tRNAs. The protein is tRNA (guanine-N(1)-)-methyltransferase of Lachnoclostridium phytofermentans (strain ATCC 700394 / DSM 18823 / ISDg) (Clostridium phytofermentans).